The sequence spans 149 residues: Transcription factor Atoh7 (149 aa).

One can recognise a bHLH domain in the interval 41 to 93 (RRRLAANARERRRMQGLNTAFDRLRRVVPQWGQDKKLSKYETLQMALSYIIAL).

Forms a heterodimer with TCF3 isoform E47; interaction may be required for DNA-binding in certain situations. Expressed in retinal ganglion cells. Expressed in the cerebellum, trapezoid body, ventral nucleus of the lateral lamniscus and in areas of the auditory hindbrain such as the cochlear nucleus, lateral superior olive and medial nucleus of the trapezoid body. Expressed in the modiolar nerve root and in the cochlear in a small group of bushy neurons within the acoustic nerve. Expressed weakly in the sensory epithelia of the saccule and utricle.

It localises to the nucleus. The protein resides in the perikaryon. Its subcellular location is the cell projection. It is found in the axon. Its function is as follows. Transcription factor that binds to DNA at the consensus sequence 5'-CAG[GC]TG-3'. Dimerization with TCF3 isoform E47 may be required in certain situations. Binds to gene promoters and enhancer elements, and thereby regulates a transcriptional program of retinal ganglion cell (RGC) determinant genes. Although the exact mechanism is not certain, retinal transcription regulation by ATOH7 has a role in RGC determination and survival, photoreceptor population development, targeting of RGC axons to the optic nerve and development of the retino-hypothalamic tract. Binds to its own promoter and enhancer sequences, suggesting autoregulation of ATOH7 transcription. Required for retinal circadian rhythm photoentrainment. Plays a role in brainstem auditory signaling and binaural processing. The polypeptide is Transcription factor Atoh7 (Mus musculus (Mouse)).